The sequence spans 287 residues: Glycine--tRNA ligase alpha subunit (287 aa).

It belongs to the class-II aminoacyl-tRNA synthetase family. Tetramer of two alpha and two beta subunits.

Its subcellular location is the cytoplasm. It catalyses the reaction tRNA(Gly) + glycine + ATP = glycyl-tRNA(Gly) + AMP + diphosphate. The polypeptide is Glycine--tRNA ligase alpha subunit (Campylobacter jejuni subsp. jejuni serotype O:6 (strain 81116 / NCTC 11828)).